The sequence spans 638 residues: Voltage-gated potassium channel KCNC2 (638 aa).

The Cytoplasmic portion of the chain corresponds to 1–229; the sequence is MGKIENNERV…EDPYSSRAAR (229 aa). The interval 47–75 is disordered; that stretch reads LTAAGDKLQPLPPPLSPPPRPPPLSPVPS. Residues 56-72 are compositionally biased toward pro residues; it reads PLPPPLSPPPRPPPLSP. Zn(2+)-binding residues include H124, C130, C151, and C152. A helical transmembrane segment spans residues 230-248; sequence FIAFASLFFILVSITTFCL. 2 N-linked (GlcNAc...) asparagine glycosylation sites follow: N259 and N266. Residues 284–303 form a helical membrane-spanning segment; the sequence is YVEGVCVVWFTFEFLVRIVF. Residues 304–314 are Cytoplasmic-facing; it reads SPNKLEFIKNL. Residues 315–337 traverse the membrane as a helical segment; the sequence is LNIIDFVAILPFYLEVGLSGLSS. A helical; Voltage-sensor membrane pass occupies residues 346–368; the sequence is FLRVVRFVRILRIFKLTRHFVGL. At 369–381 the chain is on the cytoplasmic side; that stretch reads RVLGHTLRASTNE. The chain crosses the membrane as a helical span at residues 382 to 401; it reads FLLLIIFLALGVLIFATMIY. 4 residues coordinate K(+): T437, L438, G439, and Y440. The Selectivity filter signature appears at 437–442; sequence TLGYGD. Residues 451–473 traverse the membrane as a helical segment; sequence MLVGALCALAGVLTIAMPVPVIV. At 474–638 the chain is on the cytoplasmic side; it reads NNFGMYYSLA…RSRSPIPSIL (165 aa). The disordered stretch occupies residues 538 to 572; the sequence is SVLSGDDSTGSEPPLSPPERLPIRRSSTRDKNRRG. S564 carries the post-translational modification Phosphoserine; by PKA. S600 is modified (phosphoserine).

Belongs to the potassium channel family. C (Shaw) (TC 1.A.1.2) subfamily. Kv3.2/KCNC2 sub-subfamily. In terms of assembly, homotetramer and heterotetramer with other channel-forming alpha subunits, such as KCNC1. Interacts with KCNC1. Homotetramer or heterotetramer channel activity is regulated by association with modulating ancillary subunits such as KCNE1, KCNE2 and KCNE3, creating a functionally diverse range of channel complexes. Interacts with KCNE1, KCNE2 and KCNE3. In terms of processing, phosphorylated by PKA in cortical synaptosomes. cAMP-dependent phosphorylation inhibits channel activity. Histamine H2 receptor- and PKA-induced phosphorylation extends action potential spike duration, reduces action potential spike amplitude, sustains maximum firing frequency in hippocampal interneurons; also reduces the incidence of high-frequency oscillations in hippocampal CA3 pyramidal cell layers. As to expression, expressed in neurons of the visual cortex during postnatal development. Expressed in neurons of the globus pallidus at postnatal age day 7 (P7), onward. Expressed in thalamic relay neurons. Expressed in neurons in layer IV and deeper cortical layers of the neocortex. Expressed in hippocampal interneurons. Expressed in nonpyramidal interneurons in the basolateral amygdala. Expressed in retinal ganglion cells (at protein level). Widely expressed in the brain. Expressed in numerous thalamic relay neurons throughout the dorsal thalamus. Expressed in interneurons of the deep layers V-VI of the cerebral cortex, the CA1 and CA3 pyramidal and dentate gyrus (DG) granule cells of the hippocampus, in neurons of the caudate-putamen, globus pallidus and subthalamic nucleus. Also expressed in the optic layer of interior colliculus, the inferior colliculus, the red nucleus, the medial geniculate, the ventral lateral lemiscus, the reticulotegmental nucleus and in the deep cerebellar nuclei. Expressed in globus pallidus (GP) neurons.

It localises to the cell membrane. The protein localises to the membrane. Its subcellular location is the perikaryon. It is found in the cell projection. The protein resides in the axon. It localises to the synapse. The protein localises to the synaptosome. Its subcellular location is the dendrite. It is found in the postsynaptic cell membrane. The protein resides in the presynaptic cell membrane. It localises to the apical cell membrane. The protein localises to the basolateral cell membrane. The enzyme catalyses K(+)(in) = K(+)(out). With respect to regulation, inhibited by Stichodactyla helianthus peptide ShK. Inhibited by millimolar levels of tetraethylammonium (TEA). Contrary to other channels, inhibited only by millimolar levels of 4-aminopyridine (4-AP). Its function is as follows. Voltage-gated potassium channel that mediates transmembrane potassium transport in excitable membranes, primarily in the brain. Contributes to the regulation of the fast action potential repolarization and in sustained high-frequency firing in neurons of the central nervous system. Homotetramer channels mediate delayed-rectifier voltage-dependent potassium currents that activate rapidly at high-threshold voltages and inactivate slowly. Forms tetrameric channels through which potassium ions pass in accordance with their electrochemical gradient. The channel alternates between opened and closed conformations in response to the voltage difference across the membrane. Can form functional homotetrameric channels and heterotetrameric channels that contain variable proportions of KCNC1, and possibly other family members as well; channel properties depend on the type of alpha subunits that are part of the channel. Channel properties may be modulated either by the association with ancillary subunits, such as KCNE1, KCNE2 and KCNE3 or indirectly by nitric oxide (NO) through a cGMP- and PKG-mediated signaling cascade, slowing channel activation and deactivation of delayed rectifier potassium channels. Contributes to fire sustained trains of very brief action potentials at high frequency in retinal ganglion cells, thalamocortical and suprachiasmatic nucleus (SCN) neurons and in hippocampal and neocortical interneurons. Sustained maximal action potential firing frequency in inhibitory hippocampal interneurons is negatively modulated by histamine H2 receptor activation in a cAMP- and protein kinase (PKA) phosphorylation-dependent manner. Plays a role in maintaining the fidelity of synaptic transmission in neocortical GABAergic interneurons by generating action potential (AP) repolarization at nerve terminals, thus reducing spike-evoked calcium influx and GABA neurotransmitter release. Required for long-range synchronization of gamma oscillations over distance in the neocortex. Contributes to the modulation of the circadian rhythm of spontaneous action potential firing in suprachiasmatic nucleus (SCN) neurons in a light-dependent manner. The protein is Voltage-gated potassium channel KCNC2 of Rattus norvegicus (Rat).